The primary structure comprises 407 residues: D-mannose isomerase (407 aa).

Residues histidine 251 and histidine 383 each act as proton donor/acceptor in the active site.

This sequence belongs to the N-acylglucosamine 2-epimerase family. As to quaternary structure, homodimer.

The catalysed reaction is D-mannose = D-fructose. It catalyses the reaction D-lyxose = D-xylulose. With respect to regulation, significantly inhibited by divalent metal ions such as Cu(2+), Cd(2+) or Ca(2+). Functionally, catalyzes the reversible isomerization of D-mannose to D-fructose. Shows weaker activity on D-lyxose, but cannot use N-acetyl D-glucosamine. The chain is D-mannose isomerase from Thermobifida fusca (Thermomonospora fusca).